We begin with the raw amino-acid sequence, 61 residues long: Small ribosomal subunit protein uS14 (61 aa).

Positions 24, 27, 40, and 43 each coordinate Zn(2+).

It belongs to the universal ribosomal protein uS14 family. Zinc-binding uS14 subfamily. Part of the 30S ribosomal subunit. Contacts proteins S3 and S10. Zn(2+) is required as a cofactor.

In terms of biological role, binds 16S rRNA, required for the assembly of 30S particles and may also be responsible for determining the conformation of the 16S rRNA at the A site. This Roseiflexus castenholzii (strain DSM 13941 / HLO8) protein is Small ribosomal subunit protein uS14.